The chain runs to 384 residues: MGSSQKWVIGLLLFSSIFFELTAITLADDKLEESRWGNDNGCGFGRRGCGGGRFGGRGPSFGRGRGAGGGFGGGAGGGAGGGLGGGGGLGGGGGAGGGGGLGGGGGAGGGFGGGAGGGAGGGLGGGGGLGGGGGGGAGGGGGVGGGAGSGGGFGAGGGVGGGAGAGGGVGGGGGFGGGGGGGVGGGSGHGGGFGAGGGVGGGAGGGLGGGVGGGGGGGSGGGGGIGGGSGHGGGFGAGGGVGGGVGGGAAGGGGGGGGGGGGGGGGLGGGSGHGGGFGAGGGVGGGAAGGVGGGGGFGGGGGGGVGGGSGHGGGFGAGGGVGGGAGGGLGGGGGAGGGGGIGGGHGGGFGVGVGIGIGVGVGAGAGHGVGVGSGSGSGGGGNGR.

An N-terminal signal peptide occupies residues 1-27 (MGSSQKWVIGLLLFSSIFFELTAITLA).

It is found in the secreted. It localises to the cell wall. Its function is as follows. Responsible for plasticity of the cell wall. The polypeptide is Glycine-rich cell wall structural protein 1 (GRP-1) (Petunia hybrida (Petunia)).